Consider the following 235-residue polypeptide: MPRFCNSRSGALLLALLLQTSIDVWSWCLESSQCQDLTTESNLLACIRACRLDLSAETPVFPGNGDEQPLTENPRKYVMGHFRWDRFGPRNSSSAGGSAQRRAEEETAGGDGRPEPSPREGKRSYSMEHFRWGKPVGKKRRPVKVYPNVAENESAEAFPLEFKRELEGEQPDGLEQVLEPDTEKADGPYRVEHFRWGNPPKDKRYGGFMTSEKSQTPLVTLFKNAIIKNVHKKGQ.

The signal sequence occupies residues 1–26 (MPRFCNSRSGALLLALLLQTSIDVWS). Phenylalanine 87 is modified (phenylalanine amide). Residues 88–128 (GPRNSSSAGGSAQRRAEEETAGGDGRPEPSPREGKRSYSME) are disordered. A compositionally biased stretch (basic and acidic residues) spans 112–128 (GRPEPSPREGKRSYSME). Serine 124 carries the post-translational modification N-acetylserine; in Corticotropin. Residue valine 136 is modified to Valine amide. N-linked (GlcNAc...) asparagine glycosylation occurs at asparagine 152. The residue at position 154 (serine 154) is a Phosphoserine. Positions 169 to 209 (EQPDGLEQVLEPDTEKADGPYRVEHFRWGNPPKDKRYGGFM) are disordered. The segment covering 181 to 205 (DTEKADGPYRVEHFRWGNPPKDKRY) has biased composition (basic and acidic residues).

The protein belongs to the POMC family. In terms of processing, specific enzymatic cleavages at paired basic residues yield the different active peptides. In terms of tissue distribution, ACTH and MSH are produced by the pituitary gland.

The protein resides in the secreted. In terms of biological role, stimulates the adrenal glands to release cortisol. Functionally, anorexigenic peptide. Increases the pigmentation of skin by increasing melanin production in melanocytes. Increases the pigmentation of skin by increasing melanin production in melanocytes. Its function is as follows. Endogenous orexigenic opiate. In terms of biological role, endogenous opiate. The polypeptide is Pro-opiomelanocortin (Pomc) (Rattus norvegicus (Rat)).